The primary structure comprises 340 residues: Lipopolysaccharide core biosynthesis glycosyltransferase LpsE (340 aa).

Belongs to the glycosyltransferase group 1 family. Glycosyltransferase 4 subfamily.

The protein operates within bacterial outer membrane biogenesis; LPS core biosynthesis. The chain is Lipopolysaccharide core biosynthesis glycosyltransferase LpsE (lpsE) from Rhizobium meliloti (strain 1021) (Ensifer meliloti).